Here is a 157-residue protein sequence, read N- to C-terminus: MDIFSFFSADFWQANSLCFMFISAFLSATVLPGNSEVIFVALAVPKLMLGSLFNVDILALILIATAGNSLGSLTTYGIGRWMPKFDPKNYRTLWAINQLRRYGAIALLLSWLPVVGDLFCAIAGWLRLNFVTSSLFIFLGKMVRYVALLFLSTPFLL.

The next 4 membrane-spanning stretches (helical) occupy residues Ile-3–Ser-23, Ala-24–Val-44, Leu-47–Gly-67, and Ile-105–Trp-125.

To E.coli YqaA.

The protein localises to the cell membrane. This is an uncharacterized protein from Haemophilus influenzae (strain ATCC 51907 / DSM 11121 / KW20 / Rd).